Consider the following 483-residue polypeptide: Sphingomyelin synthase-related 1 (483 aa).

3 helical membrane-spanning segments follow: residues 182–202, 230–250, and 261–281; these read LIAF…MVLV, FDMC…VLFF, and MFSL…ITSL. H330 is a catalytic residue. A helical membrane pass occupies residues 349-369; sequence WTGLHTFTWVLNCFAIFLILA. Active-site residues include H373 and D377. A helical membrane pass occupies residues 376-396; it reads IDVFIAFYISSRMFLYYHAYA. Residues 397–483 lie on the Cytoplasmic side of the membrane; it reads YNHAGITATD…NSKNHTKKHN (87 aa). A compositionally biased stretch (basic and acidic residues) spans 450-461; it reads EPKITPKSDSSR. The interval 450–483 is disordered; it reads EPKITPKSDSSRKRSSVVAAKQNGNSKNHTKKHN.

Belongs to the sphingomyelin synthase family.

Its subcellular location is the membrane. This chain is Sphingomyelin synthase-related 1, found in Caenorhabditis elegans.